The sequence spans 562 residues: Dihydroxy-acid dehydratase (562 aa).

Asp-80 lines the Mg(2+) pocket. Cys-121 contributes to the [2Fe-2S] cluster binding site. 2 residues coordinate Mg(2+): Asp-122 and Lys-123. Lys-123 bears the N6-carboxylysine mark. Position 194 (Cys-194) interacts with [2Fe-2S] cluster. Glu-446 is a Mg(2+) binding site. Ser-472 serves as the catalytic Proton acceptor.

This sequence belongs to the IlvD/Edd family. Homodimer. [2Fe-2S] cluster serves as cofactor. It depends on Mg(2+) as a cofactor.

The enzyme catalyses (2R)-2,3-dihydroxy-3-methylbutanoate = 3-methyl-2-oxobutanoate + H2O. It carries out the reaction (2R,3R)-2,3-dihydroxy-3-methylpentanoate = (S)-3-methyl-2-oxopentanoate + H2O. It participates in amino-acid biosynthesis; L-isoleucine biosynthesis; L-isoleucine from 2-oxobutanoate: step 3/4. The protein operates within amino-acid biosynthesis; L-valine biosynthesis; L-valine from pyruvate: step 3/4. In terms of biological role, functions in the biosynthesis of branched-chain amino acids. Catalyzes the dehydration of (2R,3R)-2,3-dihydroxy-3-methylpentanoate (2,3-dihydroxy-3-methylvalerate) into 2-oxo-3-methylpentanoate (2-oxo-3-methylvalerate) and of (2R)-2,3-dihydroxy-3-methylbutanoate (2,3-dihydroxyisovalerate) into 2-oxo-3-methylbutanoate (2-oxoisovalerate), the penultimate precursor to L-isoleucine and L-valine, respectively. The chain is Dihydroxy-acid dehydratase from Staphylococcus aureus (strain bovine RF122 / ET3-1).